Here is a 390-residue protein sequence, read N- to C-terminus: Guanine nucleotide-binding protein alpha-7 subunit (390 aa).

Composition is skewed to low complexity over residues 1–12 and 22–42; these read MSSTTTNTTTAT and SSSPQSPSSSTSTLSPPMSPS. The disordered stretch occupies residues 1–42; it reads MSSTTTNTTTATPAIQVNGNQSSSPQSPSSSTSTLSPPMSPS. The G-alpha domain maps to 70-390; that stretch reads SELKLLLLGT…TRQTMEEGGI (321 aa). Positions 73-86 are G1 motif; the sequence is KLLLLGTGDSGKST. GTP-binding positions include 78 to 85, 213 to 219, 238 to 242, 307 to 310, and Ala363; these read GTGDSGKS, LYTRVAS, DVAGQ, and NKRD. Ser85 is a Mg(2+) binding site. Residues 211-219 form a G2 motif region; the sequence is DILYTRVAS. The segment at 234-243 is G3 motif; it reads FRMIDVAGQR. Positions 303–310 are G4 motif; sequence ILFLNKRD. The G5 motif stretch occupies residues 361–366; that stretch reads TTATDT.

The protein belongs to the G-alpha family. G proteins are composed of 3 units; alpha, beta and gamma. The alpha chain contains the guanine nucleotide binding site.

In terms of biological role, guanine nucleotide-binding proteins (G proteins) are involved as modulators or transducers in various transmembrane signaling systems. This chain is Guanine nucleotide-binding protein alpha-7 subunit (gpaG), found in Dictyostelium discoideum (Social amoeba).